Here is a 54-residue protein sequence, read N- to C-terminus: Ovomucoid (54 aa).

The 51-residue stretch at 4–54 (VDCSGYPQSACPQDYVPFCGSDNKTYSNKCNFCNAVADSNGTLTLSHFGKC) folds into the Kazal-like domain. Intrachain disulfides connect Cys-6–Cys-36, Cys-14–Cys-33, and Cys-22–Cys-54. Asn-43 carries N-linked (GlcNAc...) asparagine glycosylation.

The protein localises to the secreted. This chain is Ovomucoid, found in Gallirallus australis (Weka).